A 316-amino-acid polypeptide reads, in one-letter code: Conjugated bile acid hydrolase (316 aa).

The Nucleophile role is filled by cysteine 2. The deoxycholate site is built by cysteine 2 and arginine 18. Residue asparagine 81 coordinates taurine.

Belongs to the peptidase C59 family.

It carries out the reaction cholate + taurine = taurocholate + H2O. The catalysed reaction is taurochenodeoxycholate + H2O = chenodeoxycholate + taurine. It catalyses the reaction taurodeoxycholate + H2O = deoxycholate + taurine. The enzyme catalyses glycocholate + H2O = cholate + glycine. It carries out the reaction glycodeoxycholate + H2O = deoxycholate + glycine. The protein operates within lipid metabolism; bile acid biosynthesis. Its function is as follows. Bile salt hydrolase that catalyzes the deconjugation of glycine- and taurine-linked bile salts, which occurs naturally in the intestines of humans, releasing amino acid residues and deconjugated bile salts (bile acids). Can hydrolyze the amide bond in the bile salts taurocholate (TCA), taurodeoxycholate (TDCA), taurochenodeoxycholate (TCDCA), glycocholate (GCA) and glycodeoxycholate (GDCA). Shows highest activity toward the taurine-conjugated bile salts TCA and TCDCA. The activity toward the other three substrates (TDCA, GCA and GDCA) is relatively low. This enzyme likely contributes to bile salt resistance of the strain and may be associated with survival capability of strain JCM1131 within the human intestine by bile detoxification. The polypeptide is Conjugated bile acid hydrolase (Lactobacillus gasseri (strain ATCC 33323 / DSM 20243 / BCRC 14619 / CIP 102991 / JCM 1131 / KCTC 3163 / NCIMB 11718 / NCTC 13722 / AM63)).